We begin with the raw amino-acid sequence, 244 residues long: 2,5-diamino-6-ribosylamino-4(3H)-pyrimidinone 5'-phosphate reductase (244 aa).

Residues Thr79, Asp83, Val159, and 182 to 186 (GANVI) each bind NADP(+).

The protein belongs to the HTP reductase family. As to quaternary structure, homodimer.

The catalysed reaction is 2,5-diamino-6-(1-D-ribitylamino)pyrimidin-4(3H)-one 5'-phosphate + NADP(+) = 2,5-diamino-6-(1-D-ribosylamino)pyrimidin-4(3H)-one 5'-phosphate + NADPH + H(+). It carries out the reaction 2,5-diamino-6-(1-D-ribitylamino)pyrimidin-4(3H)-one 5'-phosphate + NAD(+) = 2,5-diamino-6-(1-D-ribosylamino)pyrimidin-4(3H)-one 5'-phosphate + NADH + H(+). Its pathway is cofactor biosynthesis; riboflavin biosynthesis. Catalyzes an early step in riboflavin biosynthesis, the NADPH-dependent reduction of the ribose side chain of 2,5-diamino-6-ribosylamino-4(3H)-pyrimidinone 5'-phosphate, yielding 2,5-diamino-6-ribitylamino-4(3H)-pyrimidinone 5'-phosphate. This chain is 2,5-diamino-6-ribosylamino-4(3H)-pyrimidinone 5'-phosphate reductase (RIB7), found in Saccharomyces cerevisiae (strain ATCC 204508 / S288c) (Baker's yeast).